A 238-amino-acid polypeptide reads, in one-letter code: Probable 2-phosphosulfolactate phosphatase (238 aa).

This sequence belongs to the ComB family. It depends on Mg(2+) as a cofactor.

The catalysed reaction is (2R)-O-phospho-3-sulfolactate + H2O = (2R)-3-sulfolactate + phosphate. The sequence is that of Probable 2-phosphosulfolactate phosphatase from Clostridium botulinum (strain Eklund 17B / Type B).